We begin with the raw amino-acid sequence, 1230 residues long: Formin-like protein 14 (1230 aa).

The region spanning 1-194 (MSLLSRFFYK…QYVARRNINS (194 aa)) is the Phosphatase tensin-type domain. The active-site Phosphocysteine intermediate is the cysteine 127. A C2 tensin-type domain is found at 200–339 (ERALSLDCVI…FRAEVLFGEV (140 aa)). Disordered regions lie at residues 412 to 432 (FNSP…SSDE), 460 to 822 (HESS…LKPL), and 1187 to 1230 (ENEK…RHRT). Low complexity predominate over residues 484–496 (DNPLNLPSDPPSS). Pro residues-rich tracts occupy residues 503 to 514 (LPPPPPPPPPPL), 524 to 535 (SQPPPPPPPPPL), 545 to 556 (SQPPPPPPPPPL), and 566 to 575 (SQPPPPPPLP). A compositionally biased stretch (polar residues) spans 579 to 591 (NRDPLTTLHQPIN). 7 stretches are compositionally biased toward pro residues: residues 592-630 (KTPP…PPPS), 637-649 (PSAP…PPPS), 660-672 (QPPP…PPTR), 679-688 (APPPPPPPPT), 699-711 (PSTP…PPPK), 718-728 (PKPPAPPPLPP), and 735-766 (APPP…PPPG). The 399-residue stretch at 809–1207 (VPTAAPKKTA…KLEKEAIKEK (399 aa)) folds into the FH2 domain. The segment covering 1187 to 1215 (ENEKQAEAEKKKLEKEAIKEKSATKKDGV) has biased composition (basic and acidic residues).

It belongs to the formin-like family. Class-II subfamily.

The sequence is that of Formin-like protein 14 (FH14) from Arabidopsis thaliana (Mouse-ear cress).